The following is a 345-amino-acid chain: Biotin synthase (345 aa).

Positions 59-286 (NEVQLSTLLS…TTMVRLSAGR (228 aa)) constitute a Radical SAM core domain. Positions 74, 78, and 81 each coordinate [4Fe-4S] cluster. 4 residues coordinate [2Fe-2S] cluster: Cys-118, Cys-149, Cys-209, and Arg-281.

Belongs to the radical SAM superfamily. Biotin synthase family. In terms of assembly, homodimer. It depends on [4Fe-4S] cluster as a cofactor. [2Fe-2S] cluster serves as cofactor.

The catalysed reaction is (4R,5S)-dethiobiotin + (sulfur carrier)-SH + 2 reduced [2Fe-2S]-[ferredoxin] + 2 S-adenosyl-L-methionine = (sulfur carrier)-H + biotin + 2 5'-deoxyadenosine + 2 L-methionine + 2 oxidized [2Fe-2S]-[ferredoxin]. It functions in the pathway cofactor biosynthesis; biotin biosynthesis; biotin from 7,8-diaminononanoate: step 2/2. In terms of biological role, catalyzes the conversion of dethiobiotin (DTB) to biotin by the insertion of a sulfur atom into dethiobiotin via a radical-based mechanism. The protein is Biotin synthase of Leptothrix cholodnii (strain ATCC 51168 / LMG 8142 / SP-6) (Leptothrix discophora (strain SP-6)).